Consider the following 233-residue polypeptide: Uracil-DNA glycosylase (233 aa).

Residue D70 is the Proton acceptor of the active site.

Belongs to the uracil-DNA glycosylase (UDG) superfamily. UNG family.

It localises to the cytoplasm. The enzyme catalyses Hydrolyzes single-stranded DNA or mismatched double-stranded DNA and polynucleotides, releasing free uracil.. Excises uracil residues from the DNA which can arise as a result of misincorporation of dUMP residues by DNA polymerase or due to deamination of cytosine. This chain is Uracil-DNA glycosylase, found in Helicobacter acinonychis (strain Sheeba).